The primary structure comprises 65 residues: Cold shock-like protein CspC (65 aa).

The region spanning 3–62 (GRVKWFNAEKGFGFIEREDGDDVFVHFSAIQQDGYKSLEEGQQVEFDIVDGARGPQAANV) is the CSD domain.

Homodimer.

Its subcellular location is the cytoplasm. This chain is Cold shock-like protein CspC (cspC), found in Bacillus cereus.